Consider the following 353-residue polypeptide: Phospho-N-acetylmuramoyl-pentapeptide-transferase (353 aa).

Transmembrane regions (helical) follow at residues 16–36 (YISVRAGISFFIAFVLTMYLM), 64–84 (AGTPTMGGVVFIFSTIIATVL), 88–108 (LNNFYIVGGILTLALFSLIGI), 130–150 (LIFQFLCAASIAGILFLYGHS), 160–180 (FPLFEMGVFGIVFWMFVIVGS), 198–218 (SILAFSTLSILVYVVGHAVFA), 228–248 (IAGELAIMGSAICGALIAFLW), 256–276 (VFMGDSGSLPLGAFMGYLAIV), 281–301 (ILLLAIGFIFVWETVSVILQV), and 330–350 (KIIVRFWIIAFMSNLIALLSL).

Belongs to the glycosyltransferase 4 family. MraY subfamily. It depends on Mg(2+) as a cofactor.

The protein localises to the cell inner membrane. The catalysed reaction is UDP-N-acetyl-alpha-D-muramoyl-L-alanyl-gamma-D-glutamyl-meso-2,6-diaminopimeloyl-D-alanyl-D-alanine + di-trans,octa-cis-undecaprenyl phosphate = di-trans,octa-cis-undecaprenyl diphospho-N-acetyl-alpha-D-muramoyl-L-alanyl-D-glutamyl-meso-2,6-diaminopimeloyl-D-alanyl-D-alanine + UMP. It participates in cell wall biogenesis; peptidoglycan biosynthesis. Its function is as follows. Catalyzes the initial step of the lipid cycle reactions in the biosynthesis of the cell wall peptidoglycan: transfers peptidoglycan precursor phospho-MurNAc-pentapeptide from UDP-MurNAc-pentapeptide onto the lipid carrier undecaprenyl phosphate, yielding undecaprenyl-pyrophosphoryl-MurNAc-pentapeptide, known as lipid I. The polypeptide is Phospho-N-acetylmuramoyl-pentapeptide-transferase (Aliarcobacter butzleri (strain RM4018) (Arcobacter butzleri)).